A 245-amino-acid chain; its full sequence is Uridylate kinase (245 aa).

15-18 (KLSG) serves as a coordination point for ATP. Residues 23–28 (GDEGFG) are involved in allosteric activation by GTP. Position 57 (Gly-57) interacts with UMP. Residues Gly-58 and Arg-62 each coordinate ATP. Residues Asp-77 and 138-145 (TGNPFCTT) each bind UMP. ATP-binding residues include Thr-165, Tyr-171, and Asp-174.

It belongs to the UMP kinase family. In terms of assembly, homohexamer.

It localises to the cytoplasm. It catalyses the reaction UMP + ATP = UDP + ADP. Its pathway is pyrimidine metabolism; CTP biosynthesis via de novo pathway; UDP from UMP (UMPK route): step 1/1. Its activity is regulated as follows. Allosterically activated by GTP. Inhibited by UTP. Its function is as follows. Catalyzes the reversible phosphorylation of UMP to UDP. The polypeptide is Uridylate kinase (Shewanella baltica (strain OS155 / ATCC BAA-1091)).